Consider the following 276-residue polypeptide: Phosphate import ATP-binding protein PstB 2 (276 aa).

One can recognise an ABC transporter domain in the interval 22-262 (MAAVNLTLGF…PKHAETARYV (241 aa)). An ATP-binding site is contributed by 54–61 (GPTGSGKT).

This sequence belongs to the ABC transporter superfamily. Phosphate importer (TC 3.A.1.7) family. The complex is composed of two ATP-binding proteins (PstB), two transmembrane proteins (PstC and PstA) and a solute-binding protein (PstS).

It localises to the cell membrane. The enzyme catalyses phosphate(out) + ATP + H2O = ADP + 2 phosphate(in) + H(+). Part of the ABC transporter complex PstSACB involved in phosphate import. Responsible for energy coupling to the transport system. In Mycobacterium bovis (strain ATCC BAA-935 / AF2122/97), this protein is Phosphate import ATP-binding protein PstB 2.